We begin with the raw amino-acid sequence, 370 residues long: Divinyl chlorophyll a/b light-harvesting protein PcbD (370 aa).

A run of 6 helical transmembrane segments spans residues 27–47 (FIAS…GSTL), 88–108 (VAAV…GALL), 140–160 (FILG…VEWA), 201–221 (VMGG…IHMV), 248–268 (AVLS…AFWA), and 315–335 (LVNV…WHAL).

The protein belongs to the PsbB/PsbC family. IsiA/Pcb subfamily. As to quaternary structure, the antenna complex consists of divinyl chlorophylls (a and b) and divinyl chlorophyll a/b binding proteins and binds more divinyl chlorophyll b than does the antenna complex from high-light-adapted Prochlorococcus. The cofactor is divinyl chlorophyll a. It depends on divinyl chlorophyll b as a cofactor.

The protein localises to the cellular thylakoid membrane. The antenna complex functions as a light receptor, it captures and delivers excitation energy to photosystems II and I. The Prochlorales pcb genes are not related to higher plant LHCs. This chain is Divinyl chlorophyll a/b light-harvesting protein PcbD (pcbD), found in Prochlorococcus marinus (strain NATL2A).